The chain runs to 76 residues: Nemertide alpha-1 (76 aa).

The N-terminal stretch at 1–28 is a signal peptide; it reads YRIASSSIAKMKTAVFLVGLLFLGLVFA. A propeptide spanning residues 29-44 is cleaved from the precursor; it reads DEAAIDSEFDQSIDKR. 3 cysteine pairs are disulfide-bonded: C46-C60, C53-C64, and C59-C70. 4-hydroxyproline occurs at positions 72 and 73.

This sequence belongs to the nemertide family. In terms of tissue distribution, confined to the epidermis and to the mucus layer.

It is found in the secreted. In terms of biological role, highly potent toxin against insect sodium channel (Nav) and with less potent activity against mammalian sodium channels. Potently inhibits inactivation of insect sodium channels of B.germanica (BgNav1) (EC(50)=8.6 nM), D.melanogaster (Dm Nav1), and arachnid sodium channel V.destructor (VdNav1). Also delays the inactivation of most mammalian Nav channels tested (human Nav1.1/SCN1A; EC(50)=124.1 nM, rat Nav1.2/SCN2A; EC(50)=359.6 nM, rat Nav1.3/SCN3A; EC(50)=135.4 nM, rat Nav1.4/SCN4A; EC(50)=145.5 nM, human Nav1.5/SCN5A; EC(50)=138.3 nM, mouse Nav1.6/SCN8A; EC(50)=240.4 nM, human Nav1.9/SCN9A; EC(50)=76.5 nM). 1 uM is enough to completely inhibits the inactivation, resulting in sustained non-inactivating currents. In addition, the toxin significantly enhances the recovery from inactivation, and the open state is not required for the toxin to interact with the channel. In vivo, injection into green crabs (Carcinus maenas at 1 mug/kg) of small doses (1-5 ug/kg) results in slow and fast permanent paralysis, whereas injection of high doses (more than 10 ug/kg) causes death. Injection into juvenile Blaptica dubia cockroaches results in death or permanent paralysis at doses higher than 7.1 ug/kg. Injection into brine shrimp (Artemia salina) stops movement or causes death after 24 hours (EC(50)=0.3 uM). In the rare inherited cardiac arrhythmia Brugada syndrome 1 (BRGDA1), this toxin is able to restore the loss of function by reducing channel inactivation, without affecting activation, by binding to Nav1.5/SCN5A. This is Nemertide alpha-1 from Lineus lacteus (Ribbon worm).